The following is a 394-amino-acid chain: Elongation factor Tu (394 aa).

A tr-type G domain is found at 10–204; the sequence is KPHVNVGTIG…AVDEWIPTPT (195 aa). The segment at 19-26 is G1; it reads GHIDHGKT. Residue 19–26 coordinates GTP; the sequence is GHIDHGKT. Residue Thr26 participates in Mg(2+) binding. Residues 60–64 form a G2 region; that stretch reads GITIN. The G3 stretch occupies residues 81–84; that stretch reads DCPG. GTP contacts are provided by residues 81–85 and 136–139; these read DCPGH and NKCD. Positions 136–139 are G4; that stretch reads NKCD. A G5 region spans residues 174–176; sequence SAL.

It belongs to the TRAFAC class translation factor GTPase superfamily. Classic translation factor GTPase family. EF-Tu/EF-1A subfamily. Monomer.

The protein localises to the cytoplasm. It carries out the reaction GTP + H2O = GDP + phosphate + H(+). Its function is as follows. GTP hydrolase that promotes the GTP-dependent binding of aminoacyl-tRNA to the A-site of ribosomes during protein biosynthesis. In Mycoplasma genitalium (strain ATCC 33530 / DSM 19775 / NCTC 10195 / G37) (Mycoplasmoides genitalium), this protein is Elongation factor Tu.